The primary structure comprises 428 residues: GTPase Obg (428 aa).

The region spanning 1–158 is the Obg domain; sequence MFVDQVKVYV…RYIVLELKVL (158 aa). Residues 117–143 are disordered; the sequence is AKGGRGGRGNTRFATPANPAPQLSEHG. An OBG-type G domain is found at 159 to 329; the sequence is ADVGLVGFPS…LLFEVANQLE (171 aa). GTP is bound by residues 165–172, 190–194, 212–215, 282–285, and 310–312; these read GFPSVGKS, FTTLV, DLPG, NKMD, and SAV. Mg(2+) is bound by residues serine 172 and threonine 192. Residues 350–428 form the OCT domain; it reads TMEDEEIPFN…LLEFEFEFID (79 aa).

The protein belongs to the TRAFAC class OBG-HflX-like GTPase superfamily. OBG GTPase family. Monomer. The cofactor is Mg(2+).

It localises to the cytoplasm. Its function is as follows. An essential GTPase which binds GTP, GDP and possibly (p)ppGpp with moderate affinity, with high nucleotide exchange rates and a fairly low GTP hydrolysis rate. Plays a role in control of the cell cycle, stress response, ribosome biogenesis and in those bacteria that undergo differentiation, in morphogenesis control. This is GTPase Obg from Bacillus velezensis (strain DSM 23117 / BGSC 10A6 / LMG 26770 / FZB42) (Bacillus amyloliquefaciens subsp. plantarum).